We begin with the raw amino-acid sequence, 423 residues long: TPR repeat-containing protein YpiA (423 aa).

TPR repeat units follow at residues 33–66 (DEDK…YPNE), 67–100 (TELT…DPSY), 135–168 (PVID…QSEI), 171–204 (VNVH…NPDP), 238–271 (TSLY…DEYN), 272–305 (KELF…DPGF), 306–339 (VEAL…GEED), 340–373 (PKYN…YRED), and 374–407 (RDFL…DGAN).

As to quaternary structure, interacts with the RNA polymerase core.

This Bacillus subtilis (strain 168) protein is TPR repeat-containing protein YpiA (ypiA).